We begin with the raw amino-acid sequence, 419 residues long: MVETTTMMKVLVRVREFDVEKDLPAVEELERRCQVGLSGDMAAVHDHADDGDGAAAKEKKKTKTKTKKKKASMSLCVEQIGDPLARVRHAPEHVMLVAEYGEEEEKKKVVGVIKACVKTVSRGGKQEKPFVKVANLLGLRVSPSHRRLGIGTALVRRAEEWCVARGAEHATMATTESNAASLALFTGRFGYAPFRRPEFIGHPVHAHRLPVARGHRVFQLPPEVAAAAYARLLPPQDAEFLPADMPALLAHKLTLGTFVAVAADGASFAVLSVWDSTRSLSLRVSGAPALLRASLAALRALDRGAPWLHLPSIPDIFRPFGAYLLYGLRMSGPDGPALLRSLCHHAHNVARKNPACAVVAADISPDDPAAAAVPRWRRFCCDEDVWCIKNLNPDEHDADDWAAPPPPPGRHLFVDPREF.

The N-acetyltransferase domain maps to 12–210 (VRVREFDVEK…GHPVHAHRLP (199 aa)). The disordered stretch occupies residues 44 to 68 (VHDHADDGDGAAAKEKKKTKTKTKK). Positions 58–68 (EKKKTKTKTKK) are enriched in basic residues.

The protein belongs to the acetyltransferase family. In terms of assembly, interacts (via C-terminus) with HDR3 (via N-terminus). In terms of processing, ubiquitinated at Lys-63 by HDR3. Polyubiquitination of GW6A delays its degradation by the 26S proteasome and enhances GW6A histone acetyltransferase activity. In terms of tissue distribution, expressed in roots, leaf blades, leaf sheaths, shoot apical meristem and young panicles.

It localises to the nucleus. Possesses intrinsic histone acetyltransferase activity and acts as a positive regulator of grain weight, hull size, yield, and plant biomass. Regulates postitively grain weight and yield by enlarging spikelet hulls via increasing cell number and accelerating grain filling. In vitro, catalyzes the acetylation of histone H4 at Lys-6 (H4K5ac), Lys-13 (H4K12ac) and Lys-17 (H4K16ac). Involved in the regulation of plastochron (the time interval between leaf initiation event). In Oryza sativa subsp. japonica (Rice), this protein is Acetyl transferase GW6a.